The chain runs to 66 residues: UPF0337 protein bsl1473 (66 aa).

This sequence belongs to the UPF0337 (CsbD) family.

The chain is UPF0337 protein bsl1473 from Bradyrhizobium diazoefficiens (strain JCM 10833 / BCRC 13528 / IAM 13628 / NBRC 14792 / USDA 110).